A 230-amino-acid chain; its full sequence is Gilatoxin (230 aa).

The Peptidase S1 domain maps to 1–230 (IIGGQECDET…ISFLFWIQSI (230 aa)). Cystine bridges form between cysteine 7–cysteine 146, cysteine 26–cysteine 42, cysteine 125–cysteine 193, cysteine 157–cysteine 172, and cysteine 183–cysteine 208. The active-site Charge relay system is the histidine 41. A glycan (N-linked (GlcNAc...) asparagine) is linked at asparagine 84. Aspartate 93 acts as the Charge relay system in catalysis. Serine 187 functions as the Charge relay system in the catalytic mechanism.

Belongs to the peptidase S1 family. In terms of processing, extensively glycosylated, contains approximately 8 mol of monosaccharide per mol of toxin. As to expression, expressed by the mandibular venom gland.

It is found in the secreted. Its function is as follows. Has kallikrein-like activity, releases bradykinin from kininogen. Catalyzes the hydrolysis of various arginine ester substrates for trypsin and thrombin and degrades both angiotensin I and II by cleavage of the dipeptide Asp-Arg from the NH2-terminal end. Fibrinogen is also degraded but a fibrin clot is not produced. May have a potentiating effect on potent hemorrhagic toxins present in the venom. The sequence is that of Gilatoxin from Heloderma horridum horridum (Mexican beaded lizard).